Here is a 149-residue protein sequence, read N- to C-terminus: Large ribosomal subunit protein bL9 (149 aa).

It belongs to the bacterial ribosomal protein bL9 family.

Binds to the 23S rRNA. In Klebsiella pneumoniae subsp. pneumoniae (strain ATCC 700721 / MGH 78578), this protein is Large ribosomal subunit protein bL9.